A 62-amino-acid chain; its full sequence is Short neurotoxin A (62 aa).

Polar residues predominate over residues 1-16 (RRCFNHPSSQPQTNKS). The tract at residues 1–21 (RRCFNHPSSQPQTNKSCPPGE) is disordered. 4 disulfides stabilise this stretch: Cys-3–Cys-24, Cys-17–Cys-41, Cys-43–Cys-54, and Cys-55–Cys-60.

The protein belongs to the three-finger toxin family. Short-chain subfamily. Type I alpha-neurotoxin sub-subfamily. As to expression, expressed by the venom gland.

The protein localises to the secreted. In terms of biological role, binds to muscle nicotinic acetylcholine receptor (nAChR) and inhibit acetylcholine from binding to the receptor, thereby impairing neuromuscular transmission. The sequence is that of Short neurotoxin A from Laticauda crockeri (Crocker's sea snake).